Here is a 316-residue protein sequence, read N- to C-terminus: C1GALT1-specific chaperone 1 (316 aa).

The Cytoplasmic portion of the chain corresponds to 1 to 6 (MLSESS). Residues 7-26 (SFLKGVMLGSIFCALITMLG) traverse the membrane as a helical; Signal-anchor for type II membrane protein segment. Over 27–316 (HIRIGNRMHH…FLPPNGSEND (290 aa)) the chain is Lumenal.

It belongs to the glycosyltransferase 31 family. Beta3-Gal-T subfamily. As to quaternary structure, associates with core 1 beta-3-galactosyltransferase (C1GALT1), probably not with the soluble active form.

Its subcellular location is the membrane. Its function is as follows. Probable chaperone required for the generation of 1 O-glycan Gal-beta1-3GalNAc-alpha1-Ser/Thr (T antigen), which is a precursor for many extended O-glycans in glycoproteins. Probably acts as a specific molecular chaperone assisting the folding/stability of core 1 beta-3-galactosyltransferase (C1GALT1). The sequence is that of C1GALT1-specific chaperone 1 (C1galt1c1) from Rattus norvegicus (Rat).